A 146-amino-acid polypeptide reads, in one-letter code: uncharacterized protein (146 aa).

Residues 9 to 141 enclose the HTH marR-type domain; sequence VADIEKSLRH…FEKSLMKLQH (133 aa). The segment at residues 55–78 is a DNA-binding region (H-T-H motif); it reads IGELSGKMYLACSTTTDLIDRMQK.

This is an uncharacterized protein from Bacillus subtilis (strain 168).